The primary structure comprises 350 residues: MSKNKLSKGQQRRVNANHQRRLKTSVEKADYDDNLFGEPAEGIVISRFGMHADVESADGEVHRCNIRRTIRSLVTGDRVVWRPGKAAAEGVNVKGIVEAVHERTSVLTRPDFYDGVKPIAANIDQIVIVSAILPELSLNIIDRYLVGCETLQVEPLIVLNKIDLLDDEGMDFVNEQMDIYRNIGYRVLMVSSHTQDGLKPLEEALTGRISIFAGQSGVGKSSLLNALLGLQNEILTNDVSNVSGLGQHTTTAARLYHFPHGGDVIDSPGVREFGLWHLEPEQITRGFVEFHDYLGHCKYRDCKHDADPGCAIREAVENGAIAETRFENYHRILESMAQVKTRKNFSDTDD.

The span at 1–17 shows a compositional bias: polar residues; that stretch reads MSKNKLSKGQQRRVNAN. Residues 1 to 24 are disordered; sequence MSKNKLSKGQQRRVNANHQRRLKT. Positions 104 to 273 constitute a CP-type G domain; the sequence is TSVLTRPDFY…VIDSPGVREF (170 aa). Residues 160-163 and 214-222 each bind GTP; these read NKID and GQSGVGKSS. Cys-297, Cys-302, His-304, and Cys-310 together coordinate Zn(2+).

The protein belongs to the TRAFAC class YlqF/YawG GTPase family. RsgA subfamily. Monomer. Associates with 30S ribosomal subunit, binds 16S rRNA. The cofactor is Zn(2+).

It is found in the cytoplasm. Functionally, one of several proteins that assist in the late maturation steps of the functional core of the 30S ribosomal subunit. Helps release RbfA from mature subunits. May play a role in the assembly of ribosomal proteins into the subunit. Circularly permuted GTPase that catalyzes slow GTP hydrolysis, GTPase activity is stimulated by the 30S ribosomal subunit. The protein is Small ribosomal subunit biogenesis GTPase RsgA of Salmonella schwarzengrund (strain CVM19633).